The following is a 295-amino-acid chain: Sulfotransferase 1A1 (295 aa).

Residue 48–53 coordinates 3'-phosphoadenylyl sulfate; sequence KSGTTW. 106–108 is a binding site for substrate; the sequence is KTH. H108 serves as the catalytic Proton acceptor. Residues R130, S138, Y193, 227 to 232, and 255 to 259 each bind 3'-phosphoadenylyl sulfate; these read TSFKEM and FMRKG. The residue at position 138 (S138) is a Phosphoserine.

Belongs to the sulfotransferase 1 family. In terms of assembly, homodimer. In terms of tissue distribution, ubiquitously expressed in canine tissues with highest expression in male and female liver.

It is found in the cytoplasm. The catalysed reaction is a phenol + 3'-phosphoadenylyl sulfate = an aryl sulfate + adenosine 3',5'-bisphosphate + H(+). It carries out the reaction 17beta-estradiol + 3'-phosphoadenylyl sulfate = 17beta-estradiol 3-sulfate + adenosine 3',5'-bisphosphate + H(+). It catalyses the reaction 4-ethylphenol + 3'-phosphoadenylyl sulfate = 4-ethylphenyl sulfate + adenosine 3',5'-bisphosphate + H(+). The enzyme catalyses 4-nitrophenol + 3'-phosphoadenylyl sulfate = 4-nitrophenyl sulfate + adenosine 3',5'-bisphosphate. The catalysed reaction is dopamine + 3'-phosphoadenylyl sulfate = dopamine 3-O-sulfate + adenosine 3',5'-bisphosphate + H(+). It carries out the reaction dopamine + 3'-phosphoadenylyl sulfate = dopamine 4-O-sulfate + adenosine 3',5'-bisphosphate + H(+). It catalyses the reaction 3,3',5-triiodo-L-thyronine + 3'-phosphoadenylyl sulfate = 3,3',5-triiodo-L-thyronine sulfate + adenosine 3',5'-bisphosphate + H(+). The enzyme catalyses 3,3',5'-triiodo-L-thyronine + 3'-phosphoadenylyl sulfate = 3,3',5'-triiodo-L-thyronine sulfate + adenosine 3',5'-bisphosphate + H(+). The catalysed reaction is 3,3'-diiodo-L-thyronine + 3'-phosphoadenylyl sulfate = 3,3'-diiodo-L-thyronine sulfate + adenosine 3',5'-bisphosphate + H(+). It carries out the reaction L-thyroxine + 3'-phosphoadenylyl sulfate = L-thyroxine sulfate + adenosine 3',5'-bisphosphate + H(+). Its function is as follows. Sulfotransferase that utilizes 3'-phospho-5'-adenylyl sulfate (PAPS) as sulfonate donor to catalyze the sulfate conjugation of a wide variety of acceptor molecules bearing a hydroxyl or an amine group. Sulfonation increases the water solubility of most compounds, and therefore their renal excretion, but it can also result in bioactivation to form active metabolites. Displays broad substrate specificity for small phenolic compounds. Plays an important role in the sulfonation of endogenous molecules such as steroid hormones. Mediates also the metabolic activation of carcinogenic N-hydroxyarylamines leading to highly reactive intermediates capable of forming DNA adducts, potentially resulting in mutagenesis. May play a role in gut microbiota-host metabolic interaction. O-sulfonates 4-ethylphenol (4-EP), a dietary tyrosine-derived metabolite produced by gut bacteria. The product 4-EPS crosses the blood-brain barrier and may negatively regulate oligodendrocyte maturation and myelination, affecting the functional connectivity of different brain regions associated with the limbic system. Catalyzes the sulfate conjugation of dopamine. Catalyzes the sulfation of T4 (L-thyroxine/3,5,3',5'-tetraiodothyronine), T3 (3,5,3'-triiodothyronine), rT3 (3,3',5'-triiodothyronine) and 3,3'-T2 (3,3'-diiodothyronine), with a substrate preference of 3,3'-T2 &gt; rT3 &gt; T3 &gt; T4. The protein is Sulfotransferase 1A1 (SULT1A1) of Canis lupus familiaris (Dog).